The following is a 270-amino-acid chain: S-adenosylmethionine decarboxylase proenzyme (270 aa).

The Schiff-base intermediate with substrate; via pyruvic acid role is filled by Ser-117. At Ser-117 the chain carries Pyruvic acid (Ser); by autocatalysis. His-122 functions as the Proton acceptor; for processing activity in the catalytic mechanism. Cys-145 (proton donor; for catalytic activity) is an active-site residue.

It belongs to the prokaryotic AdoMetDC family. Type 2 subfamily. In terms of assembly, heterooctamer of four alpha and four beta chains arranged as a tetramer of alpha/beta heterodimers. Pyruvate is required as a cofactor. Post-translationally, is synthesized initially as an inactive proenzyme. Formation of the active enzyme involves a self-maturation process in which the active site pyruvoyl group is generated from an internal serine residue via an autocatalytic post-translational modification. Two non-identical subunits are generated from the proenzyme in this reaction, and the pyruvate is formed at the N-terminus of the alpha chain, which is derived from the carboxyl end of the proenzyme. The post-translation cleavage follows an unusual pathway, termed non-hydrolytic serinolysis, in which the side chain hydroxyl group of the serine supplies its oxygen atom to form the C-terminus of the beta chain, while the remainder of the serine residue undergoes an oxidative deamination to produce ammonia and the pyruvoyl group blocking the N-terminus of the alpha chain.

It carries out the reaction S-adenosyl-L-methionine + H(+) = S-adenosyl 3-(methylsulfanyl)propylamine + CO2. It participates in amine and polyamine biosynthesis; S-adenosylmethioninamine biosynthesis; S-adenosylmethioninamine from S-adenosyl-L-methionine: step 1/1. In terms of biological role, catalyzes the decarboxylation of S-adenosylmethionine to S-adenosylmethioninamine (dcAdoMet), the propylamine donor required for the synthesis of the polyamines spermine and spermidine from the diamine putrescine. This chain is S-adenosylmethionine decarboxylase proenzyme, found in Pseudoalteromonas translucida (strain TAC 125).